Here is a 428-residue protein sequence, read N- to C-terminus: CRISPR system endoribonuclease Csm6 (428 aa).

A CARF domain region spans residues 1–145 (MKILISAVGT…RANREYTALT (145 aa)). The HEPN domain stretch occupies residues 146-428 (ESEIDALIME…QNKELIKMLE (283 aa)).

This sequence belongs to the CRISPR-associated Csm6 family. Homodimer. The composite ssRNase active site is formed at the dimer interface.

Non-specific ssRNase activity is allosterically activated about 1000-fold by cyclic hexaadenylate (cA6), a second messenger produced by Cas10 of the ternary Csm effector complex in the presence of a cognate target RNA. ssRNase activity is inhibited by physiological concentrations of ATP (1 mM), activity is restored by cOA. CRISPR (clustered regularly interspaced short palindromic repeat) is an adaptive immune system that provides protection against mobile genetic elements (viruses, transposable elements and conjugative plasmids). CRISPR clusters contain spacers, sequences complementary to antecedent mobile elements, and target invading nucleic acids. CRISPR clusters are transcribed and processed into CRISPR RNA (crRNA). The type III-A Csm complex binds crRNA and acts as a crRNA-guided RNase, DNase and cyclic oligoadenylate synthase; binding of target RNA cognate to the crRNA is required for all activities. In a heterologous host this Csm effector complex restricts ssRNA phage MS2, suggesting it may target RNA viruses in vivo. This protein is not part of the Csm complex. Functionally, csm functions as a non-specific ssDNase. Base-pairing between crRNA and target RNA to form a ternary Csm complex activates a ssDNase activity; target RNA cleavage suppresses the ssDNase, a temporal control that prevents uncontrolled DNA degradation. Viral RNA transcripts probably tether the Csm complex to the viral genome, recruiting Cas10 ssDNA activity which is able to degrade DNA in the transcription bubble, spatially controlling the DNase activity. Its function is as follows. A single-strand-specific endoribonuclease (ssRNase) that is approximately 1000-fold stimulated by cyclic oligoadenylate (cOA); although several species of cOA are synthesized by this organism only cyclic hexaadenylate (cA6) stimulates the ssRNase activity. Cleaves preferentially within GA or AA dinucleotides, although the presence of cA6 broadens the preference. Linear oligoadenylates do not activate the RNase. The polypeptide is CRISPR system endoribonuclease Csm6 (Streptococcus thermophilus).